A 615-amino-acid chain; its full sequence is uncharacterized protein (615 aa).

Composition is skewed to polar residues over residues 1-11, 41-55, and 128-140; these read MSETSSNSPAS, LSQN…SSKV, and TSGS…NAPP. Disordered stretches follow at residues 1-61 and 97-149; these read MSET…QALV and HQNH…KASS. A phosphoserine mark is found at serine 149 and serine 152. The segment at 181–217 is disordered; that stretch reads LIHPEQTDRGLPYAPDEKFHNSGSLKLPKGASLEDLS. Phosphoserine occurs at positions 219 and 275. Disordered regions lie at residues 266 to 481, 493 to 565, and 586 to 615; these read KPLA…KFTG, RLQK…KPSF, and GVET…TEEQ. The segment covering 272-283 has biased composition (polar residues); sequence RQRSTADLTESD. Phosphothreonine is present on residues threonine 276 and threonine 297. Positions 312 to 323 are enriched in basic and acidic residues; that stretch reads EAEKGFYTKDGE. Over residues 356-376 the composition is skewed to low complexity; sequence PSLSSASQPSAASSSSSSEPS. The segment covering 505 to 522 has biased composition (polar residues); the sequence is PNKSKSPSGTKSPASGET. Threonine 514 carries the phosphothreonine modification. At serine 516 the chain carries Phosphoserine. Positions 586 to 599 are enriched in basic and acidic residues; sequence GVETRKEVEPKEEA. Over residues 600-615 the composition is skewed to acidic residues; sequence VIPEEDVEVEVETEEQ.

This is an uncharacterized protein from Schizosaccharomyces pombe (strain 972 / ATCC 24843) (Fission yeast).